The primary structure comprises 401 residues: Enolase (401 aa).

Gln-154 serves as a coordination point for (2R)-2-phosphoglycerate. Glu-196 acts as the Proton donor in catalysis. Mg(2+) is bound by residues Asp-232, Glu-275, and Asp-302. Positions 327, 356, 357, and 378 each coordinate (2R)-2-phosphoglycerate. Residue Lys-327 is the Proton acceptor of the active site.

It belongs to the enolase family. The cofactor is Mg(2+).

Its subcellular location is the cytoplasm. It localises to the secreted. The protein localises to the cell surface. It catalyses the reaction (2R)-2-phosphoglycerate = phosphoenolpyruvate + H2O. It functions in the pathway carbohydrate degradation; glycolysis; pyruvate from D-glyceraldehyde 3-phosphate: step 4/5. Functionally, catalyzes the reversible conversion of 2-phosphoglycerate (2-PG) into phosphoenolpyruvate (PEP). It is essential for the degradation of carbohydrates via glycolysis. This chain is Enolase, found in Haloarcula marismortui (strain ATCC 43049 / DSM 3752 / JCM 8966 / VKM B-1809) (Halobacterium marismortui).